A 277-amino-acid chain; its full sequence is MGIRVYKPTTNGRRNMTSLDFAEITTSTPEKSLLVSLKSKAGRNNNGRITVRHQGGGHKRHYRLIDFKRNKDAVEAVVKTIEYDPNRSANIALVHYTDGVKAYIIAPKGLEVGQRIVSGPEADIKVGNALPLANIPVGTLVHNIELKPGRGGELVRAAGASAQVLGQEGKYTLVRLQSGEVRMILGTCRATVGVVGNEQHGLVNLGKAGRSRWKGIRPTVRGSVMNPNDHPHGGGEGKAPVGRKAPSTPWGKPALGLKTRNKKAKSDKLIVRRRNEK.

Residues 219–277 (TVRGSVMNPNDHPHGGGEGKAPVGRKAPSTPWGKPALGLKTRNKKAKSDKLIVRRRNEK) are disordered. The span at 264 to 277 (AKSDKLIVRRRNEK) shows a compositional bias: basic and acidic residues.

It belongs to the universal ribosomal protein uL2 family. As to quaternary structure, part of the 50S ribosomal subunit. Forms a bridge to the 30S subunit in the 70S ribosome.

Functionally, one of the primary rRNA binding proteins. Required for association of the 30S and 50S subunits to form the 70S ribosome, for tRNA binding and peptide bond formation. It has been suggested to have peptidyltransferase activity; this is somewhat controversial. Makes several contacts with the 16S rRNA in the 70S ribosome. This chain is Large ribosomal subunit protein uL2, found in Streptococcus gordonii (strain Challis / ATCC 35105 / BCRC 15272 / CH1 / DL1 / V288).